The sequence spans 419 residues: Gamma-glutamyl phosphate reductase (419 aa).

The protein belongs to the gamma-glutamyl phosphate reductase family.

It localises to the cytoplasm. It catalyses the reaction L-glutamate 5-semialdehyde + phosphate + NADP(+) = L-glutamyl 5-phosphate + NADPH + H(+). It functions in the pathway amino-acid biosynthesis; L-proline biosynthesis; L-glutamate 5-semialdehyde from L-glutamate: step 2/2. In terms of biological role, catalyzes the NADPH-dependent reduction of L-glutamate 5-phosphate into L-glutamate 5-semialdehyde and phosphate. The product spontaneously undergoes cyclization to form 1-pyrroline-5-carboxylate. The chain is Gamma-glutamyl phosphate reductase from Mannheimia succiniciproducens (strain KCTC 0769BP / MBEL55E).